The chain runs to 252 residues: Cell division protein ZapD (252 aa).

Belongs to the ZapD family. In terms of assembly, interacts with FtsZ.

It is found in the cytoplasm. Its function is as follows. Cell division factor that enhances FtsZ-ring assembly. Directly interacts with FtsZ and promotes bundling of FtsZ protofilaments, with a reduction in FtsZ GTPase activity. The protein is Cell division protein ZapD of Dechloromonas aromatica (strain RCB).